Here is a 107-residue protein sequence, read N- to C-terminus: Large ribosomal subunit protein uL24 (107 aa).

It belongs to the universal ribosomal protein uL24 family. Part of the 50S ribosomal subunit.

Its function is as follows. One of two assembly initiator proteins, it binds directly to the 5'-end of the 23S rRNA, where it nucleates assembly of the 50S subunit. One of the proteins that surrounds the polypeptide exit tunnel on the outside of the subunit. The polypeptide is Large ribosomal subunit protein uL24 (Pelotomaculum thermopropionicum (strain DSM 13744 / JCM 10971 / SI)).